A 154-amino-acid polypeptide reads, in one-letter code: Myoglobin (154 aa).

In terms of domain architecture, Globin spans 2–148 (GLSDGEWQLV…FRKDIAAKYK (147 aa)). Position 4 is a phosphoserine (Ser-4). His-65 contacts nitrite. His-65 is a binding site for O2. Thr-68 carries the phosphothreonine modification. His-94 serves as a coordination point for heme b.

Belongs to the globin family. Monomeric.

Its subcellular location is the cytoplasm. It localises to the sarcoplasm. It catalyses the reaction Fe(III)-heme b-[protein] + nitric oxide + H2O = Fe(II)-heme b-[protein] + nitrite + 2 H(+). It carries out the reaction H2O2 + AH2 = A + 2 H2O. Its function is as follows. Monomeric heme protein which primary function is to store oxygen and facilitate its diffusion within muscle tissues. Reversibly binds oxygen through a pentacoordinated heme iron and enables its timely and efficient release as needed during periods of heightened demand. Depending on the oxidative conditions of tissues and cells, and in addition to its ability to bind oxygen, it also has a nitrite reductase activity whereby it regulates the production of bioactive nitric oxide. Under stress conditions, like hypoxia and anoxia, it also protects cells against reactive oxygen species thanks to its pseudoperoxidase activity. The chain is Myoglobin (MB) from Castor fiber (Eurasian beaver).